Here is a 421-residue protein sequence, read N- to C-terminus: Serine--tRNA ligase (421 aa).

229-231 (TSE) contributes to the L-serine binding site. ATP is bound at residue 260–262 (RRE). Glutamate 283 contacts L-serine. Residue 347–350 (EISS) coordinates ATP. Serine 381 contacts L-serine.

It belongs to the class-II aminoacyl-tRNA synthetase family. Type-1 seryl-tRNA synthetase subfamily. Homodimer. The tRNA molecule binds across the dimer.

It is found in the cytoplasm. The enzyme catalyses tRNA(Ser) + L-serine + ATP = L-seryl-tRNA(Ser) + AMP + diphosphate + H(+). It catalyses the reaction tRNA(Sec) + L-serine + ATP = L-seryl-tRNA(Sec) + AMP + diphosphate + H(+). The protein operates within aminoacyl-tRNA biosynthesis; selenocysteinyl-tRNA(Sec) biosynthesis; L-seryl-tRNA(Sec) from L-serine and tRNA(Sec): step 1/1. Catalyzes the attachment of serine to tRNA(Ser). Is also able to aminoacylate tRNA(Sec) with serine, to form the misacylated tRNA L-seryl-tRNA(Sec), which will be further converted into selenocysteinyl-tRNA(Sec). The protein is Serine--tRNA ligase of Fusobacterium nucleatum subsp. nucleatum (strain ATCC 25586 / DSM 15643 / BCRC 10681 / CIP 101130 / JCM 8532 / KCTC 2640 / LMG 13131 / VPI 4355).